The sequence spans 212 residues: Protein-L-isoaspartate O-methyltransferase 1 (212 aa).

Serine 60 is a catalytic residue.

Belongs to the methyltransferase superfamily. L-isoaspartyl/D-aspartyl protein methyltransferase family.

The protein resides in the cytoplasm. It carries out the reaction [protein]-L-isoaspartate + S-adenosyl-L-methionine = [protein]-L-isoaspartate alpha-methyl ester + S-adenosyl-L-homocysteine. In terms of biological role, catalyzes the methyl esterification of L-isoaspartyl residues in peptides and proteins that result from spontaneous decomposition of normal L-aspartyl and L-asparaginyl residues. It plays a role in the repair and/or degradation of damaged proteins. The protein is Protein-L-isoaspartate O-methyltransferase 1 of Anaeromyxobacter sp. (strain Fw109-5).